The primary structure comprises 117 residues: Large ribosomal subunit protein bL20 (117 aa).

It belongs to the bacterial ribosomal protein bL20 family.

Binds directly to 23S ribosomal RNA and is necessary for the in vitro assembly process of the 50S ribosomal subunit. It is not involved in the protein synthesizing functions of that subunit. In Leptospira borgpetersenii serovar Hardjo-bovis (strain JB197), this protein is Large ribosomal subunit protein bL20.